The primary structure comprises 314 residues: uncharacterized protein (314 aa).

The tract at residues 39 to 146 (QENVDSDSTD…SDYSSDESNS (108 aa)) is disordered. Residues 56–76 (STKNVSRNIPKNIPKSISKNI) show a composition bias toward polar residues. The segment covering 88–131 (IPKNVSKNIPKNVPKNVSKNIPKNIPKNVPNKSRNKYSNYSEDS) has biased composition (low complexity). Positions 132-141 (NYSEDSDYSS) are enriched in acidic residues.

This is an uncharacterized protein from Acanthamoeba polyphaga mimivirus (APMV).